The primary structure comprises 451 residues: Bifunctional protein GlmU (451 aa).

The interval 1–226 is pyrophosphorylase; sequence MVAVAILAAG…YLEISGINDR (226 aa). UDP-N-acetyl-alpha-D-glucosamine contacts are provided by residues 7-10, lysine 21, glutamine 73, and 78-79; these read LAAG and GT. Mg(2+) is bound at residue aspartate 103. Residues glycine 140, glutamate 155, asparagine 170, and asparagine 224 each contribute to the UDP-N-acetyl-alpha-D-glucosamine site. Position 224 (asparagine 224) interacts with Mg(2+). The linker stretch occupies residues 227–247; that stretch reads KQLATAYDILQNRIKDYWMRA. The segment at 248–451 is N-acetyltransferase; that stretch reads GVTLIDPDSI…ISGWRMKTDD (204 aa). The UDP-N-acetyl-alpha-D-glucosamine site is built by arginine 329 and lysine 347. Histidine 359 serves as the catalytic Proton acceptor. UDP-N-acetyl-alpha-D-glucosamine-binding residues include tyrosine 362 and asparagine 373. Acetyl-CoA contacts are provided by residues alanine 376, 382-383, alanine 419, and arginine 436; that span reads NY.

The protein in the N-terminal section; belongs to the N-acetylglucosamine-1-phosphate uridyltransferase family. This sequence in the C-terminal section; belongs to the transferase hexapeptide repeat family. As to quaternary structure, homotrimer. The cofactor is Mg(2+).

The protein resides in the cytoplasm. The enzyme catalyses alpha-D-glucosamine 1-phosphate + acetyl-CoA = N-acetyl-alpha-D-glucosamine 1-phosphate + CoA + H(+). It carries out the reaction N-acetyl-alpha-D-glucosamine 1-phosphate + UTP + H(+) = UDP-N-acetyl-alpha-D-glucosamine + diphosphate. The protein operates within nucleotide-sugar biosynthesis; UDP-N-acetyl-alpha-D-glucosamine biosynthesis; N-acetyl-alpha-D-glucosamine 1-phosphate from alpha-D-glucosamine 6-phosphate (route II): step 2/2. Its pathway is nucleotide-sugar biosynthesis; UDP-N-acetyl-alpha-D-glucosamine biosynthesis; UDP-N-acetyl-alpha-D-glucosamine from N-acetyl-alpha-D-glucosamine 1-phosphate: step 1/1. It functions in the pathway bacterial outer membrane biogenesis; LPS lipid A biosynthesis. Catalyzes the last two sequential reactions in the de novo biosynthetic pathway for UDP-N-acetylglucosamine (UDP-GlcNAc). The C-terminal domain catalyzes the transfer of acetyl group from acetyl coenzyme A to glucosamine-1-phosphate (GlcN-1-P) to produce N-acetylglucosamine-1-phosphate (GlcNAc-1-P), which is converted into UDP-GlcNAc by the transfer of uridine 5-monophosphate (from uridine 5-triphosphate), a reaction catalyzed by the N-terminal domain. This chain is Bifunctional protein GlmU, found in Gloeothece citriformis (strain PCC 7424) (Cyanothece sp. (strain PCC 7424)).